Reading from the N-terminus, the 598-residue chain is Proline--tRNA ligase (598 aa).

The protein belongs to the class-II aminoacyl-tRNA synthetase family. ProS type 1 subfamily. As to quaternary structure, homodimer.

The protein localises to the cytoplasm. It carries out the reaction tRNA(Pro) + L-proline + ATP = L-prolyl-tRNA(Pro) + AMP + diphosphate. In terms of biological role, catalyzes the attachment of proline to tRNA(Pro) in a two-step reaction: proline is first activated by ATP to form Pro-AMP and then transferred to the acceptor end of tRNA(Pro). As ProRS can inadvertently accommodate and process non-cognate amino acids such as alanine and cysteine, to avoid such errors it has two additional distinct editing activities against alanine. One activity is designated as 'pretransfer' editing and involves the tRNA(Pro)-independent hydrolysis of activated Ala-AMP. The other activity is designated 'posttransfer' editing and involves deacylation of mischarged Ala-tRNA(Pro). The misacylated Cys-tRNA(Pro) is not edited by ProRS. The polypeptide is Proline--tRNA ligase (Synechococcus sp. (strain CC9311)).